The following is a 346-amino-acid chain: Lipase chaperone (346 aa).

A helical membrane pass occupies residues 10–30; it reads TIVFGVITSVLLLLLLIYYVF.

The protein belongs to the lipase chaperone family.

The protein resides in the cell inner membrane. May be involved in the folding of the extracellular lipase during its passage through the periplasm. The protein is Lipase chaperone (lifO) of Acinetobacter venetianus (strain ATCC 31012 / DSM 23050 / BCRC 14357 / CCUG 45561 / CIP 110063 / KCTC 2702 / LMG 19082 / RAG-1).